The following is a 359-amino-acid chain: Peroxisome assembly protein 12 (359 aa).

Topologically, residues 1–24 (MSTTIRASQLASSISPKTEEKQPS) are peroxisomal matrix. The chain crosses the membrane as a helical span at residues 25–52 (VFDIIAQENLATSIRPALQHLVKYLAFF). Topologically, residues 53 to 56 (KPKT) are cytoplasmic. A helical transmembrane segment spans residues 57–81 (FLSVHRNFDEYYIIFDLILQNHYLR). Residues 82-106 (NYGASFTENFYSMKRIASGTGNPPN) lie on the Peroxisomal matrix side of the membrane. Residues 107–128 (DGRERIMSLITLVGWPYVENKL) traverse the membrane as a helical segment. Over 129-133 (NQLYD) the chain is Cytoplasmic. A helical transmembrane segment spans residues 134–184 (RLKEVYECRSWSSINGMKAKCQKMFVIIWPYIKTALKAVKSALQLAYILNR). At 185 to 253 (SSIHSPWLYF…ILGLPGIVSR (69 aa)) the chain is on the peroxisomal matrix side. The chain crosses the membrane as a helical span at residues 254–281 (LFAYGLFFVQFLDYMYNTDLAKLTKTGL). The Cytoplasmic segment spans residues 282–359 (DGAIPSPPHK…NVQHLIRLFV (78 aa)). Positions 307, 310, 328, and 331 each coordinate Zn(2+). The segment at 307–346 (CPICLKKRVNDTALFVSGYVFCYTCINQYVNTYNKCPVTG) adopts an RING-type; degenerate zinc-finger fold.

Belongs to the pex2/pex10/pex12 family. As to quaternary structure, component of the PEX2-PEX10-PEX12 retrotranslocation channel.

Its subcellular location is the peroxisome membrane. The protein operates within protein modification; protein ubiquitination. Component of a retrotranslocation channel required for peroxisome organization by mediating export of the PEX5/prx-5 receptor from peroxisomes to the cytosol, thereby promoting PEX5/prx-5 recycling. The retrotranslocation channel is composed of PEX2/prx-2, PEX10/prx-10 and PEX12/prx-12; each subunit contributing transmembrane segments that coassemble into an open channel that specifically allows the passage of PEX5/prx-5 through the peroxisomal membrane. PEX12/prx-12 also regulates PEX5/prx-5 recycling by activating the E3 ubiquitin-protein ligase activity of PEX10/prx-10. When PEX5 recycling is compromised, PEX12/prx-12 stimulates PEX10-mediated polyubiquitination of PEX5/prx-5, leading to its subsequent degradation. The polypeptide is Peroxisome assembly protein 12 (prx-12) (Caenorhabditis elegans).